A 438-amino-acid chain; its full sequence is Diaminopimelate decarboxylase (438 aa).

The residue at position 73 (lysine 73) is an N6-(pyridoxal phosphate)lysine. Pyridoxal 5'-phosphate-binding positions include serine 217, glycine 254, and 294-297 (EPGR). Substrate is bound by residues arginine 297, arginine 333, and tyrosine 337. Cysteine 362 (proton donor) is an active-site residue. Residues glutamate 363 and tyrosine 391 each coordinate substrate. Tyrosine 391 lines the pyridoxal 5'-phosphate pocket.

Belongs to the Orn/Lys/Arg decarboxylase class-II family. LysA subfamily. In terms of assembly, homodimer. Pyridoxal 5'-phosphate is required as a cofactor.

The enzyme catalyses meso-2,6-diaminopimelate + H(+) = L-lysine + CO2. It functions in the pathway amino-acid biosynthesis; L-lysine biosynthesis via DAP pathway; L-lysine from DL-2,6-diaminopimelate: step 1/1. With respect to regulation, competitively inhibited by the substrate analog azelaic acid in vitro but not in vivo. Its function is as follows. Specifically catalyzes the decarboxylation of meso-diaminopimelate (meso-DAP) to L-lysine. The chain is Diaminopimelate decarboxylase from Methanocaldococcus jannaschii (strain ATCC 43067 / DSM 2661 / JAL-1 / JCM 10045 / NBRC 100440) (Methanococcus jannaschii).